The primary structure comprises 175 residues: Small ribosomal subunit protein uS5 (175 aa).

The 64-residue stretch at 19-82 (WVDRLVSVNR…DDAKKNVIRV (64 aa)) folds into the S5 DRBM domain.

This sequence belongs to the universal ribosomal protein uS5 family. Part of the 30S ribosomal subunit. Contacts proteins S4 and S8.

Its function is as follows. With S4 and S12 plays an important role in translational accuracy. Functionally, located at the back of the 30S subunit body where it stabilizes the conformation of the head with respect to the body. This chain is Small ribosomal subunit protein uS5, found in Salinibacter ruber (strain DSM 13855 / M31).